The sequence spans 2136 residues: Methylcytosine dioxygenase TET1 (2136 aa).

Composition is skewed to basic residues over residues 1–12 and 20–31; these read MSRSRHARPSRL and KKKKNSQLRKTT. Residues 1 to 47 are disordered; sequence MSRSRHARPSRLVRKEDVNKKKKNSQLRKTTKGANKNVASVKTLSPG. Over residues 32-43 the composition is skewed to polar residues; that stretch reads KGANKNVASVKT. A sufficient for binding to genomic CpG islands region spans residues 528 to 674; that stretch reads LGIAQLSQAG…NGPKSESMDY (147 aa). A CXXC-type zinc finger spans residues 584 to 625; the sequence is EKKKRKRCGVCEPCQQKTNCGECTYCKNRKNSHQICKKRKCE. Cys-591, Cys-594, Cys-597, Cys-603, Cys-606, Cys-609, Cys-619, and Cys-624 together coordinate Zn(2+). Composition is skewed to basic and acidic residues over residues 712 to 724, 732 to 743, and 849 to 869; these read QNKK…HVKG, EAEKSKNSEVDK, and IHNE…EPKD. Disordered stretches follow at residues 712-746, 849-876, 899-923, and 1119-1169; these read QNKK…KKRT, IHNE…VQPS, QLSE…EQRT, and EKGT…VSYQ. Position 871 is a phosphoserine (Ser-871). Residues 901-911 are compositionally biased toward low complexity; the sequence is SEAPSENSSPS. The segment covering 1119-1139 has biased composition (polar residues); it reads EKGTIQQKPPSSVHNNHGSSL. The segment covering 1146–1163 has biased composition (basic residues); that stretch reads TQKKTKSTPSRDRRKKKP. Zn(2+) is bound by residues Cys-1422, Cys-1424, Cys-1482, His-1508, and Cys-1510. Arg-1551 serves as a coordination point for 2-oxoglutarate. Zn(2+)-binding residues include Cys-1561, Cys-1563, Cys-1579, and Cys-1588. Positions 1580-1593 are interaction with DNA; the sequence is SWSMYFNGCKFGRS. Residue Lys-1589 forms a Glycyl lysine isopeptide (Lys-Gly) (interchain with G-Cter in ubiquitin) linkage. Cys-1648 serves as a coordination point for Zn(2+). A 2-oxoglutarate-binding site is contributed by Cys-1664. His-1670 contributes to the Zn(2+) binding site. Residues His-1672 and Asp-1674 each contribute to the Fe cation site. Asn-1677 is a substrate binding site. His-1706 lines the 2-oxoglutarate pocket. Disordered regions lie at residues 1774-1897 and 1919-1984; these read EKKP…AAAD and EPLI…SPAE. The segment covering 1786–1800 has biased composition (low complexity); it reads NSTTTNNSKPSSLPT. Composition is skewed to polar residues over residues 1824-1833 and 1937-1953; these read SSDNTKTYSL and HQPN…QDLA. The span at 1957-1976 shows a compositional bias: acidic residues; it reads MEEDEQHSEADEPPSDEPLS. Residue His-2028 coordinates Fe cation. 2043-2045 contributes to the 2-oxoglutarate binding site; that stretch reads RLS. 2049-2051 provides a ligand contact to substrate; the sequence is YQH. His-2059 contributes to the Zn(2+) binding site. The span at 2074 to 2087 shows a compositional bias: basic and acidic residues; it reads KNKKMKASEQKDQA. The tract at residues 2074–2100 is disordered; that stretch reads KNKKMKASEQKDQAANEGPEQSSEVNE.

This sequence belongs to the TET family. Interacts with SIN3A; recruits the transcriptional corepressor SIN3A to gene promoters. Interacts with HCFC1. Interacts (via C-terminus) with OGT. Found in a complex composed of at least SINHCAF, SIN3A, HDAC1, SAP30, RBBP4, OGT and TET1. Interacts with QSER1. Interacts with NONO (via DNA-binding domain); this interaction recruits TET1 to genomic loci. Interacts with FOXA2; this interaction may recruit TET1 to specific enhancers to preserve their unmethylated status and hence allowing gene expression. Interacts with RNF2. Directly interacts (via C-terminus) with the DCAF1 component of the CRL4(VprBP) E3 ubiquitin-protein ligase complex. As to quaternary structure, interacts with UHRF1; this interaction induces the recruitment of TET1 to replicating heterochromatin. Interacts with DCAF1. The cofactor is Fe(2+). Requires Zn(2+) as cofactor. Glycosylated. Interaction with OGT leads to GlcNAcylation. In terms of processing, monoubiquitinated at Lys-1589 by the DCX (DDB1-CUL4-X-box) E3 ubiquitin-protein ligase complex called CRL4(VprBP) or CUL4A-RBX1-DDB1-DCAF1/VPRBP complex; this modification promotes binding to DNA. As to expression, expressed in fetal heart, lung and brain, and in adult skeletal muscle, thymus and ovary. Not detected in adult heart, lung or brain. Up-regulated in glioblastoma cells (at protein level). Expressed in embryonic stem cells (at protein level).

The protein resides in the nucleus. Its subcellular location is the chromosome. It carries out the reaction a 5-methyl-2'-deoxycytidine in DNA + 2-oxoglutarate + O2 = a 5-hydroxymethyl-2'-deoxycytidine in DNA + succinate + CO2. The enzyme catalyses a 5-hydroxymethyl-2'-deoxycytidine in DNA + 2-oxoglutarate + O2 = a 5-formyl-2'-deoxycytidine in DNA + succinate + CO2 + H2O. The catalysed reaction is a 5-formyl-2'-deoxycytidine in DNA + 2-oxoglutarate + O2 = a 5-carboxyl-2'-deoxycytidine in DNA + succinate + CO2 + H(+). Dioxygenase that plays a key role in active DNA demethylation, by catalyzing the sequential oxidation of the modified genomic base 5-methylcytosine (5mC) into 5-hydroxymethylcytosine (5hmC), 5-formylcytosine (5fC), and 5-carboxylcytosine (5caC). In addition to its role in DNA demethylation, plays a more general role in chromatin regulation by recruiting histone modifying protein complexes to alter histone marks and chromatin accessibility, leading to both activation and repression of gene expression. Plays therefore a role in many biological processes, including stem cell maintenance, T- and B-cell development, inflammation regulation, genomic imprinting, neural activity or DNA repair. Involved in the balance between pluripotency and lineage commitment of cells and plays a role in embryonic stem cells maintenance and inner cell mass cell specification. Together with QSER1, plays an essential role in the protection and maintenance of transcriptional and developmental programs to inhibit the binding of DNMT3A/3B and therefore de novo methylation. May play a role in pancreatic beta-cell specification during development. In this context, may function as an upstream epigenetic regulator of PAX4 presumably through direct recruitment by FOXA2 to a PAX4 enhancer to preserve its unmethylated status, thereby potentiating PAX4 expression to adopt beta-cell fate during endocrine lineage commitment. Under DNA hypomethylation conditions, such as in female meiotic germ cells, may induce epigenetic reprogramming of pericentromeric heterochromatin (PCH), the constitutive heterochromatin of pericentromeric regions. PCH forms chromocenters in the interphase nucleus and chromocenters cluster at the prophase of meiosis. In this context, may also be essential for chromocenter clustering in a catalytic activity-independent manner, possibly through the recruitment polycomb repressive complex 1 (PRC1) to the chromocenters. During embryonic development, may be required for normal meiotic progression in oocytes and meiotic gene activation. Binds preferentially to DNA containing cytidine-phosphate-guanosine (CpG) dinucleotides over CpH (H=A, T, and C), hemimethylated-CpG and hemimethylated-hydroxymethyl-CpG. Its function is as follows. Dioxygenase that plays a key role in active DNA demethylation. Binds to promoters, particularly to those with high CG content. In hippocampal neurons, isoform 1 regulates the expression of a unique subset of genes compared to isoform 2, although some overlap exists between both isoforms, hence differentially regulates excitatory synaptic transmission. In hippocampal neuron cell cultures, isoform 1 controls both miniature excitatory postsynaptic current amplitude and frequency. Isoform 1 may regulate genes involved in hippocampal-dependent memory, leading to positive regulation of memory, contrary to isoform 2 that may decrease memory. In terms of biological role, dioxygenase that plays a key role in active DNA demethylation. As isoform 1, binds to promoters, particularly to those with high CG content, however displays reduced global chromatin affinity compared with isoform 1, leading to decreased global DNA demethylation compared with isoform 1. Contrary to isoform 1, isoform 2 localizes during S phase to sites of ongoing DNA replication in heterochromatin, causing a significant de novo 5hmC formation, globally, and more so in heterochromatin, including LINE 1 interspersed DNA repeats leading to their activation. In hippocampal neurons, isoform 2 regulates the expression of a unique subset of genes compared to isoform 1, although some overlap between both isoforms, hence differentially regulates excitatory synaptic transmission. In hippocampal neuron cell cultures, isoform 2 controls miniature excitatory postsynaptic current frequency, but not amplitude. Isoform 2 may regulate genes involved in hippocampal-dependent memory, leading to negative regulation of memory, contrary to isoform 1 that may improve memory. In immature and partially differentiated gonadotrope cells, directly represses luteinizing hormone gene LHB expression and does not catalyze 5hmC at the gene promoter. This chain is Methylcytosine dioxygenase TET1, found in Homo sapiens (Human).